Here is a 349-residue protein sequence, read N- to C-terminus: Probable G-protein coupled receptor 21 (349 aa).

The Extracellular segment spans residues 1-32; the sequence is MNSTLDGNQSSHPFCLLAFGYLETVNFCLLEV. N-linked (GlcNAc...) asparagine glycans are attached at residues Asn-2 and Asn-8. A helical membrane pass occupies residues 33 to 53; sequence LIIVFLTVLIISGNIIVIFVF. Topologically, residues 54-75 are cytoplasmic; that stretch reads HCAPLLNHHTTSYFIQTMAYAD. The helical transmembrane segment at 76-96 threads the bilayer; the sequence is LFVGVSCVVPSLSLLHHPLPV. Topologically, residues 97-104 are extracellular; the sequence is EESLTCQI. A helical transmembrane segment spans residues 105 to 125; that stretch reads FGFVVSVLKSVSMASLACISI. At 126–147 the chain is on the cytoplasmic side; sequence DRYIAITKPLTYNTLVTPWRLR. Residues 148–168 traverse the membrane as a helical segment; that stretch reads LCIFLIWLYSTLVFLPSFFHW. At 169 to 191 the chain is on the extracellular side; that stretch reads GKPGYHGDVFQWCAESWHTDSYF. Residues 192-212 traverse the membrane as a helical segment; the sequence is TLFIVMMLYAPAALIVCFTYF. Over 213-252 the chain is Cytoplasmic; that stretch reads NIFRICQQHTKDISERQARFSSQSGETGEVQACPDKRYAM. A helical membrane pass occupies residues 253–273; sequence VLFRITSVFYILWLPYIIYFL. At 274–283 the chain is on the extracellular side; the sequence is LESSTGHSNR. The helical transmembrane segment at 284–304 threads the bilayer; it reads FASFLTTWLAISNSFCNCVIY. Over 305-349 the chain is Cytoplasmic; it reads SLSNSVFQRGLKRLSGAMCTSCASQTTANDPYTVRSKGPLNGCHI.

Belongs to the G-protein coupled receptor 1 family. Not detected in the brain regions thalamus, putamen, caudate, frontal cortex, pons, hypothalamus, hippocampus.

The protein localises to the cell membrane. Its function is as follows. Orphan receptor. This Homo sapiens (Human) protein is Probable G-protein coupled receptor 21 (GPR21).